A 379-amino-acid chain; its full sequence is ATP phosphoribosyltransferase regulatory subunit (379 aa).

This sequence belongs to the class-II aminoacyl-tRNA synthetase family. HisZ subfamily. As to quaternary structure, heteromultimer composed of HisG and HisZ subunits.

The protein resides in the cytoplasm. It participates in amino-acid biosynthesis; L-histidine biosynthesis; L-histidine from 5-phospho-alpha-D-ribose 1-diphosphate: step 1/9. Required for the first step of histidine biosynthesis. May allow the feedback regulation of ATP phosphoribosyltransferase activity by histidine. This chain is ATP phosphoribosyltransferase regulatory subunit, found in Sinorhizobium fredii (strain NBRC 101917 / NGR234).